The chain runs to 89 residues: SAP domain-containing new25 (89 aa).

One can recognise an SAP domain in the interval 44–78; the sequence is PSQWSKKQLIEYCKKNSLKTSGSHEELVIRVQNHL.

The protein is SAP domain-containing new25 (new25) of Schizosaccharomyces pombe (strain 972 / ATCC 24843) (Fission yeast).